The chain runs to 199 residues: Probable thymidylate kinase (199 aa).

Residue 9-16 participates in ATP binding; that stretch reads GIDGCGKT.

Belongs to the thymidylate kinase family.

It catalyses the reaction dTMP + ATP = dTDP + ADP. This is Probable thymidylate kinase from Methanococcus maripaludis (strain C7 / ATCC BAA-1331).